The primary structure comprises 193 residues: Dual-action ribosomal maturation protein DarP (193 aa).

Belongs to the DarP family.

It localises to the cytoplasm. Functionally, member of a network of 50S ribosomal subunit biogenesis factors which assembles along the 30S-50S interface, preventing incorrect 23S rRNA structures from forming. Promotes peptidyl transferase center (PTC) maturation. The polypeptide is Dual-action ribosomal maturation protein DarP (Vibrio cholerae serotype O1 (strain ATCC 39315 / El Tor Inaba N16961)).